Consider the following 122-residue polypeptide: Small ribosomal subunit protein uS13 (122 aa).

The tract at residues 93–122 (RRGLPVRGQNTKTNARTRKGPKRTAGGKKK) is disordered. The span at 107–122 (ARTRKGPKRTAGGKKK) shows a compositional bias: basic residues.

This sequence belongs to the universal ribosomal protein uS13 family. Part of the 30S ribosomal subunit. Forms a loose heterodimer with protein S19. Forms two bridges to the 50S subunit in the 70S ribosome.

Its function is as follows. Located at the top of the head of the 30S subunit, it contacts several helices of the 16S rRNA. In the 70S ribosome it contacts the 23S rRNA (bridge B1a) and protein L5 of the 50S subunit (bridge B1b), connecting the 2 subunits; these bridges are implicated in subunit movement. Contacts the tRNAs in the A and P-sites. The chain is Small ribosomal subunit protein uS13 from Syntrophomonas wolfei subsp. wolfei (strain DSM 2245B / Goettingen).